Reading from the N-terminus, the 158-residue chain is Small ribosomal subunit protein uS7 (158 aa).

It belongs to the universal ribosomal protein uS7 family. In terms of assembly, part of the 30S ribosomal subunit. Contacts proteins S9 and S11.

In terms of biological role, one of the primary rRNA binding proteins, it binds directly to 16S rRNA where it nucleates assembly of the head domain of the 30S subunit. Is located at the subunit interface close to the decoding center, probably blocks exit of the E-site tRNA. The polypeptide is Small ribosomal subunit protein uS7 (Flavobacterium psychrophilum (strain ATCC 49511 / DSM 21280 / CIP 103535 / JIP02/86)).